Here is a 47-residue protein sequence, read N- to C-terminus: Heat shock protein HSP 90 (47 aa).

Belongs to the heat shock protein 90 family. In terms of assembly, homodimer.

It is found in the cytoplasm. Its function is as follows. Putative molecular chaperone that may promote the maturation, structural maintenance and proper regulation of specific target proteins. The polypeptide is Heat shock protein HSP 90 (Oryctolagus cuniculus (Rabbit)).